Here is a 74-residue protein sequence, read N- to C-terminus: Sodium channel neurotoxin MeuNaTxalpha-11 (74 aa).

The N-terminal stretch at 1-7 (LMTGVES) is a signal peptide. In terms of domain architecture, LCN-type CS-alpha/beta spans 9–73 (RDAYIAKPHN…VPIRIPGKCH (65 aa)). Disulfide bonds link Cys-19-Cys-72, Cys-23-Cys-45, Cys-31-Cys-55, and Cys-35-Cys-57. Arg-74 is a propeptide (removed by a carboxypeptidase).

The protein belongs to the long (4 C-C) scorpion toxin superfamily. Sodium channel inhibitor family. Alpha subfamily. Expressed by the venom gland.

Its subcellular location is the secreted. Functionally, alpha toxins bind voltage-independently at site-3 of sodium channels (Nav) and inhibit the inactivation of the activated channels, thereby blocking neuronal transmission. The protein is Sodium channel neurotoxin MeuNaTxalpha-11 of Mesobuthus eupeus (Lesser Asian scorpion).